Here is a 263-residue protein sequence, read N- to C-terminus: ATP synthase subunit delta (263 aa).

The protein belongs to the ATPase delta chain family. F-type ATPases have 2 components, F(1) - the catalytic core - and F(0) - the membrane proton channel. F(1) has five subunits: alpha(3), beta(3), gamma(1), delta(1), epsilon(1). F(0) has three main subunits: a(1), b(2) and c(10-14). The alpha and beta chains form an alternating ring which encloses part of the gamma chain. F(1) is attached to F(0) by a central stalk formed by the gamma and epsilon chains, while a peripheral stalk is formed by the delta and b chains.

Its subcellular location is the cell membrane. In terms of biological role, f(1)F(0) ATP synthase produces ATP from ADP in the presence of a proton or sodium gradient. F-type ATPases consist of two structural domains, F(1) containing the extramembraneous catalytic core and F(0) containing the membrane proton channel, linked together by a central stalk and a peripheral stalk. During catalysis, ATP synthesis in the catalytic domain of F(1) is coupled via a rotary mechanism of the central stalk subunits to proton translocation. Its function is as follows. This protein is part of the stalk that links CF(0) to CF(1). It either transmits conformational changes from CF(0) to CF(1) or is implicated in proton conduction. This chain is ATP synthase subunit delta, found in Cutibacterium acnes (strain DSM 16379 / KPA171202) (Propionibacterium acnes).